Reading from the N-terminus, the 520-residue chain is Poly(A)-specific ribonuclease PNLDC1 (520 aa).

Mg(2+)-binding residues include D17, E19, D260, and D354. The chain crosses the membrane as a helical span at residues 497–513 (CLLQVCGIVTAWALLAF).

This sequence belongs to the CAF1 family. It depends on Mg(2+) as a cofactor.

The protein localises to the endoplasmic reticulum membrane. It carries out the reaction Exonucleolytic cleavage of poly(A) to 5'-AMP.. In terms of biological role, 3'-exoribonuclease that has a preference for poly(A) tails of mRNAs, thereby efficiently degrading poly(A) tails. Exonucleolytic degradation of the poly(A) tail is often the first step in the decay of eukaryotic mRNAs and is also used to silence certain maternal mRNAs translationally during oocyte maturation and early embryonic development. May act as a regulator of multipotency in embryonic stem cells. Is a critical factor for proper spermatogenesis, involved in pre-piRNAs processing to generate mature piRNAs. The polypeptide is Poly(A)-specific ribonuclease PNLDC1 (Pongo abelii (Sumatran orangutan)).